The chain runs to 99 residues: Large ribosomal subunit protein uL23 (99 aa).

It belongs to the universal ribosomal protein uL23 family. Part of the 50S ribosomal subunit. Contacts protein L29, and trigger factor when it is bound to the ribosome.

Its function is as follows. One of the early assembly proteins it binds 23S rRNA. One of the proteins that surrounds the polypeptide exit tunnel on the outside of the ribosome. Forms the main docking site for trigger factor binding to the ribosome. The protein is Large ribosomal subunit protein uL23 of Francisella tularensis subsp. holarctica (strain OSU18).